The chain runs to 596 residues: ATP-dependent lipid A-core flippase (596 aa).

6 helical membrane passes run 34 to 54 (VWVL…EAGI), 80 to 100 (AAVV…GYLL), 138 to 158 (AVVF…ITLV), 164 to 184 (VVFL…IVAI), 263 to 283 (QPLT…IAVV), and 292 to 312 (VGGF…LKHL). The 284-residue stretch at 38 to 321 (VAGVLAMAAV…LMDVNQPLQR (284 aa)) folds into the ABC transmembrane type-1 domain. The 237-residue stretch at 353–589 (IEFSHVSFSY…GGLYAHLHRI (237 aa)) folds into the ABC transporter domain. 389-396 (GPSGSGKT) contributes to the ATP binding site.

This sequence belongs to the ABC transporter superfamily. Lipid exporter (TC 3.A.1.106) family. As to quaternary structure, homodimer.

It is found in the cell inner membrane. It catalyses the reaction ATP + H2O + lipid A-core oligosaccharideSide 1 = ADP + phosphate + lipid A-core oligosaccharideSide 2.. Involved in lipopolysaccharide (LPS) biosynthesis. Translocates lipid A-core from the inner to the outer leaflet of the inner membrane. Transmembrane domains (TMD) form a pore in the inner membrane and the ATP-binding domain (NBD) is responsible for energy generation. This is ATP-dependent lipid A-core flippase from Burkholderia thailandensis (strain ATCC 700388 / DSM 13276 / CCUG 48851 / CIP 106301 / E264).